Here is a 1085-residue protein sequence, read N- to C-terminus: Voltage-dependent calcium channel subunit alpha-2/delta-3 (1085 aa).

Residues 1–33 (MAGPGSLCCASRGASALLATALLYAALGDVVRS) form the signal peptide. Residues 34–1062 (EQQIPLSVVK…HPEENARECG (1029 aa)) lie on the Extracellular side of the membrane. Asn166 is a glycosylation site (N-linked (GlcNAc...) asparagine). One can recognise a VWFA domain in the interval 256-438 (DVVILVDVSG…ENVMEYLHVL (183 aa)). Residues Asp262, Ser264, and Ser266 each coordinate a divalent metal cation. Positions 262–266 (DVSGS) match the MIDAS-like motif motif. Asn309 is a glycosylation site (N-linked (GlcNAc...) asparagine). Cys412 and Cys1049 are oxidised to a cystine. Residues 452-543 (WTEAYIDSTL…RPLYEEGKKR (92 aa)) enclose the Cache domain. N-linked (GlcNAc...) asparagine glycosylation is found at Asn547 and Asn626. Residue Tyr918 is modified to Phosphotyrosine. The chain crosses the membrane as a helical span at residues 1063-1083 (GASSLQAQVALLLLPLVSSLF). Residues 1084-1085 (SR) are Cytoplasmic-facing.

Belongs to the calcium channel subunit alpha-2/delta family. In terms of assembly, dimer formed of alpha-2-2 and delta-2 chains; disulfide-linked. Voltage-dependent calcium channels are multisubunit complexes, consisting of alpha-1 (CACNA1), alpha-2 (CACNA2D), beta (CACNB) and delta (CACNA2D) subunits in a 1:1:1:1 ratio. Post-translationally, N-glycosylated. May be proteolytically processed into subunits alpha-2-3 and delta-3 that are disulfide-linked. It is however unclear whether such cleavage really takes place in vivo and has a functional role. As to expression, in heart, it is expressed in atrium but not in ventricle.

It is found in the membrane. Functionally, the alpha-2/delta subunit of voltage-dependent calcium channels regulates calcium current density and activation/inactivation kinetics of the calcium channel. Acts as a regulatory subunit for P/Q-type calcium channel (CACNA1A), N-type (CACNA1B), L-type (CACNA1C OR CACNA1D) but not T-type (CACNA1G). The sequence is that of Voltage-dependent calcium channel subunit alpha-2/delta-3 (Cacna2d3) from Rattus norvegicus (Rat).